The primary structure comprises 266 residues: Inositol-1-monophosphatase (266 aa).

Residues Glu-69, Asp-86, Leu-88, and Asp-89 each contribute to the Mg(2+) site. Glu-69 is a substrate binding site. Substrate-binding positions include 88–91 (LDGT), Arg-185, and Asp-214. Asp-214 lines the Mg(2+) pocket.

It belongs to the inositol monophosphatase superfamily. The cofactor is Mg(2+).

It carries out the reaction a myo-inositol phosphate + H2O = myo-inositol + phosphate. This chain is Inositol-1-monophosphatase (suhB), found in Rhizobium meliloti (strain 1021) (Ensifer meliloti).